Consider the following 472-residue polypeptide: MAAPMLRRLCRVPQSLVWLRGSRAVRPGARGMLVAPRARGLFKEFFPESGTKTELPELFDRRRAGSSPQTVYCGFDPTGDSLHVGHLLTLLGLFHFQRAGHNVIALVGGSTALLGDPSGRTKGREALSAECVRANAHALRRGLEALAANHARLFADGRPWGSFTVLDNAAWFQEQHLVDFLATVGGHFRMGTLLSRLSVQSRLKSPEGMSLAEFFYQVLQAYDFYYLFQHYGCRVQLGGSDQLGNIMSGYEFIHKLTGEDVFGITVPLITSTTGAKLGKSAGNAVWLNREKTSPFELYQFFVRQQDDSVERYLKLFTFLPLPEIDHIMQLHVKEPEKRVAQKRLAAEVTKLVHGQEGLDSAKRCTQALYHSSIEALEVMSDQELKELFKEASFSELVLDPGTSVIDTCRKANAIPDGPRGYRMITEGGVSINHRQVTNPESVLVIGQHILKNGLSLLKIGKRNFYIIKWLQL.

Residue tyrosine 72 participates in L-tyrosine binding. Aspartate 76 is a binding site for ATP. A 'HIGH' region motif is present at residues 77 to 86; it reads PTGDSLHVGH. L-tyrosine is bound by residues aspartate 116, tyrosine 216, glutamine 220, aspartate 223, and glutamine 242. Residues isoleucine 269 and lysine 279 each coordinate ATP. Positions 276–280 match the 'KMSKS' region motif; the sequence is KLGKS. N6-acetyllysine is present on residues lysine 350 and lysine 362.

The protein belongs to the class-I aminoacyl-tRNA synthetase family. As to quaternary structure, homodimer.

It localises to the mitochondrion matrix. The enzyme catalyses tRNA(Tyr) + L-tyrosine + ATP = L-tyrosyl-tRNA(Tyr) + AMP + diphosphate + H(+). Functionally, catalyzes the attachment of tyrosine to tRNA(Tyr) in a two-step reaction: tyrosine is first activated by ATP to form Tyr-AMP and then transferred to the acceptor end of tRNA(Tyr). The polypeptide is Tyrosine--tRNA ligase, mitochondrial (Yars2) (Mus musculus (Mouse)).